The chain runs to 247 residues: 2,3-bisphosphoglycerate-dependent phosphoglycerate mutase (247 aa).

Residues 8-15, 21-22, arginine 60, 87-90, lysine 98, 114-115, and 183-184 each bind substrate; these read RHGESTWN, TG, ERHY, RR, and GN. The active-site Tele-phosphohistidine intermediate is the histidine 9. The active-site Proton donor/acceptor is glutamate 87.

Belongs to the phosphoglycerate mutase family. BPG-dependent PGAM subfamily. As to quaternary structure, homodimer.

It catalyses the reaction (2R)-2-phosphoglycerate = (2R)-3-phosphoglycerate. It participates in carbohydrate degradation; glycolysis; pyruvate from D-glyceraldehyde 3-phosphate: step 3/5. In terms of biological role, catalyzes the interconversion of 2-phosphoglycerate and 3-phosphoglycerate. This chain is 2,3-bisphosphoglycerate-dependent phosphoglycerate mutase, found in Delftia acidovorans (strain DSM 14801 / SPH-1).